The sequence spans 87 residues: DLQNVNITLRILFRPVASQLPRIYTSIGEDYDERFDAGELITQRQVSDDLTEREFTEAVEAKQVAQQEAERARKLEAAEDIAYQLSR.

Residue T8 is modified to Phosphothreonine. K62 carries the post-translational modification N6-acetyllysine. Y83 carries the post-translational modification Phosphotyrosine.

It belongs to the prohibitin family. The mitochondrial prohibitin complex consists of two subunits (PHB1 and PHB2), assembled into a membrane-associated ring-shaped supercomplex of approximately 1 mDa. Interacts with STOML2. Interacts with MAP1LC3B (membrane-bound form LC3-II); the interaction requires PHB2 and takes place upon Parkin-mediated mitochondrial damage. Interacts with STAT3 (unphosphorylated or phosphorylated at 'Ser-727'). Interacts with CLPB. Interacts with CD86 (via cytoplasmic domain); the interactions increases after priming with CD40.

Its subcellular location is the mitochondrion inner membrane. It localises to the nucleus. The protein localises to the cytoplasm. It is found in the cell membrane. Functionally, protein with pleiotropic attributes mediated in a cell-compartment- and tissue-specific manner, which include the plasma membrane-associated cell signaling functions, mitochondrial chaperone, and transcriptional co-regulator of transcription factors in the nucleus. Plays a role in adipose tissue and glucose homeostasis in a sex-specific manner. Contributes to pulmonary vascular remodeling by accelerating proliferation of pulmonary arterial smooth muscle cells. In terms of biological role, in the mitochondria, together with PHB2, forms large ring complexes (prohibitin complexes) in the inner mitochondrial membrane (IMM) and functions as a chaperone protein that stabilizes mitochondrial respiratory enzymes and maintains mitochondrial integrity in the IMM, which is required for mitochondrial morphogenesis, neuronal survival, and normal lifespan. The prohibitin complex, with DNAJC19, regulates cardiolipin remodeling and the protein turnover of OMA1 in a cardiolipin-binding manner. Regulates mitochondrial respiration activity playing a role in cellular aging. The prohibitin complex plays a role of mitophagy receptor involved in targeting mitochondria for autophagic degradation. Involved in mitochondrial-mediated antiviral innate immunity, activates RIG-I-mediated signal transduction and production of IFNB1 and proinflammatory cytokine IL6. In the nucleus, acts as a transcription coregulator, enhances promoter binding by TP53, a transcription factor it activates, but reduces the promoter binding by E2F1, a transcription factor it represses. Interacts with STAT3 to affect IL17 secretion in T-helper Th17 cells. Its function is as follows. In the plasma membrane, cooperates with CD86 to mediate CD86-signaling in B lymphocytes that regulates the level of IgG1 produced through the activation of distal signaling intermediates. Upon CD40 engagement, required to activate NF-kappa-B signaling pathway via phospholipase C and protein kinase C activation. This Mesocricetus auratus (Golden hamster) protein is Prohibitin 1 (PHB1).